The following is a 134-amino-acid chain: Photosystem II assembly factor lipoprotein Psb27 (134 aa).

Residues 1-21 (MKRFWAMVCALFLSVSLLLTS) form the signal peptide. Cysteine 22 carries N-palmitoyl cysteine lipidation. Cysteine 22 carries the S-diacylglycerol cysteine lipid modification.

Belongs to the Psb27 family. Part of a photosystem II (PSII) assembly intermediate complex PSII-I; crystallized from a strain deleted of psbJ, it forms monomeric PSII before addition of the oxygen evolving complex. PSII-I includes 3 assembly factors not found in mature PSII (Psb27, Psb28 and Psb34). Binds to the lumenal side of PSII, adjacent to the CP43 (psbC) subunit.

The protein resides in the cellular thylakoid membrane. Plays a role in the repair and/or biogenesis of the calcium-manganese-oxide cluster on the lumenal face of the thylakoid membrane. Its presence in a photosystem II (PSII) preparation prevents binding of other extrinsic subunits PsbO, PsbU and PsbV, and thus assembly of calcium-manganese-oxide cluster. Psb27-containing complexes lack oxygen evolving activity and an oxidizable calcium-manganese-oxide cluster, but have a normal reaction center. This chain is Photosystem II assembly factor lipoprotein Psb27, found in Thermosynechococcus vestitus (strain NIES-2133 / IAM M-273 / BP-1).